We begin with the raw amino-acid sequence, 39 residues long: Bomanin Short 3 (39 aa).

The N-terminal stretch at 1–18 (MKFLSLAFVLGLLALANA) is a signal peptide. Positions 19–23 (TPLNP) are excised as a propeptide. Cys32 and Cys35 are joined by a disulfide.

This sequence belongs to the bomanin family. Hemolymph (at protein level).

Its subcellular location is the secreted. In terms of biological role, secreted immune-induced peptide induced by Toll signaling. Has a role in resistance bacterial and fungal infections. The strength of antimicrobial activity appears to correlate with the overall level of expression. Has no activity against the fungus C.glabrata in vitro. This chain is Bomanin Short 3, found in Drosophila melanogaster (Fruit fly).